Consider the following 257-residue polypeptide: MIHSKRLRLWLYLVLLAVFIGACGMKKEESSKDKQIKENFNKTLSLYPTKNLEDFYDKEGFRDQEFEKGDKGTWIIHSKMTIETNGKNMESRGLVLYVDRNTRTTKGEFIVRELWEDKKGYSRSKEKEYPVKMEHNKIIPTKPIADDKLRKEIENFKFFVQYGDFKDINDYKDGDISYNPNVPSYSAKYQLSNDDYNVKQLRKRYDIPTKKAPKLLIKGDGDLKGSSIGHKNLEFTFIENKEENIYFTDSINFKPTE.

A signal peptide spans 1 to 22 (MIHSKRLRLWLYLVLLAVFIGA). The N-palmitoyl cysteine moiety is linked to residue C23. The S-diacylglycerol cysteine moiety is linked to residue C23.

This sequence belongs to the staphylococcal tandem lipoprotein family.

The protein resides in the cell membrane. This is an uncharacterized protein from Staphylococcus aureus (strain NCTC 8325 / PS 47).